The sequence spans 154 residues: UPF0178 protein Sala_2376 (154 aa).

The protein belongs to the UPF0178 family.

The polypeptide is UPF0178 protein Sala_2376 (Sphingopyxis alaskensis (strain DSM 13593 / LMG 18877 / RB2256) (Sphingomonas alaskensis)).